The sequence spans 3122 residues: Abnormal spindle-like microcephaly-associated protein homolog (3122 aa).

2 disordered regions span residues 1-26 (MATM…AGDP) and 139-169 (KRSL…NESF). The segment covering 10–21 (PEERGRRARPDP) has biased composition (basic and acidic residues). Positions 289–388 (STQTQIHFLS…KDSMGHVGQQ (100 aa)) are sufficient for interaction with KATNA1:KATNB1. A phosphoserine mark is found at Ser-348, Ser-373, and Ser-573. The interval 579–600 (PSTVARTTKKEGHTSKRISSLE) is disordered. The Calponin-homology (CH) 1 domain occupies 888 to 1024 (KASKELLLAF…LLWKIALAFQ (137 aa)). The stretch at 1025-1045 (VDISLNLDQLKEEIDFLKHTH) forms a coiled coil. Ser-1071 is subject to Phosphoserine. The Calponin-homology (CH) 2 domain maps to 1078–1229 (GDSVQLLMDW…YLSFLCARLL (152 aa)). IQ domains are found at residues 1234-1263 (EIRA…RDKA), 1315-1346 (QNKS…VILQ), 1410-1439 (QTKA…VVIQ), 1504-1535 (KRAA…CVLQ), 1550-1579 (LKKM…AAIT), 1600-1629 (TRSS…SVIK), 1623-1652 (ALAS…ATIK), 1696-1725 (VRES…AAIS), 1719-1750 (QCKA…LVIQ), 1769-1798 (VKRA…AAVT), 1792-1821 (QSTA…SAVK), 1842-1871 (TREA…AAVK), 1865-1896 (QHEA…AVIQ), 1915-1946 (LRHA…ALIQ), 1938-1967 (QHQC…AALQ), 1988-2017 (TKAA…AAVT), 2011-2042 (CHKA…IVIQ), 2061-2092 (LRRA…TLIE), 2134-2165 (TLKA…TLIQ), 2157-2188 (MHFA…TMVQ), 2207-2238 (LRRS…TLIQ), 2230-2261 (MHLA…IWIQ), 2279-2310 (LEKA…TVIQ), 2302-2333 (MHRA…VVIQ), 2343-2374 (QKHA…TLIQ), 2366-2397 (MHSS…IFVQ), 2416-2447 (LRKA…ALIQ), 2491-2522 (QHSA…KVIQ), 2602-2633 (KVEA…NIIE), 2674-2705 (RHRA…LIIQ), 2724-2755 (LKKS…RLFH), and 2849-2880 (ITSC…IRRS).

Interacts with KATNA1 and KATNB1; katanin complex formation KATNA1:KATNB1 is required for the association. Expressed in fetal brain, peripheral nervous system, liver and spleen. In the adult, expressed exclusively in testis, ovary and spleen.

Its subcellular location is the cytoplasm. The protein resides in the cytoskeleton. The protein localises to the spindle. It is found in the nucleus. Involved in mitotic spindle regulation and coordination of mitotic processes. The function in regulating microtubule dynamics at spindle poles including spindle orientation, astral microtubule density and poleward microtubule flux seem to depend on its association with the katanin complex formed by KATNA1 and KATNB1. Enhances the microtubule lattice severing activity of KATNA1 by recruiting the katanin complex to microtubules. Can block microtubule minus-end growth and reversely this function can be enhanced by the katanin complex. May have a preferential role in regulating neurogenesis. The sequence is that of Abnormal spindle-like microcephaly-associated protein homolog (Aspm) from Mus musculus (Mouse).